Here is a 75-residue protein sequence, read N- to C-terminus: Putative primary metabolism protein HVA1 (75 aa).

A compositionally biased stretch (polar residues) spans 1-13 (MSVQDKQGQNINV). Disordered stretches follow at residues 1-24 (MSVQDKQGQNINVGDTVYTPYRGG) and 40-75 (AAEKGVKNPPKVLFTDQNNKDVAHNPGTLTDLDKQK).

In terms of biological role, may play a role in primary metabolism. This is Putative primary metabolism protein HVA1 from Cryptococcus neoformans var. grubii serotype A (strain H99 / ATCC 208821 / CBS 10515 / FGSC 9487) (Filobasidiella neoformans var. grubii).